The chain runs to 894 residues: Phosphinomethylmalate isomerase (894 aa).

3 residues coordinate [4Fe-4S] cluster: cysteine 438, cysteine 504, and cysteine 507.

It belongs to the aconitase/IPM isomerase family. [4Fe-4S] cluster is required as a cofactor.

The catalysed reaction is phosphinomethylmalate = phosphinomethylisomalate. It catalyses the reaction phosphinomethylmalate = 2-(phosphinatomethylidene)butanedioate + H2O. It carries out the reaction 2-(phosphinatomethylidene)butanedioate + H2O = phosphinomethylisomalate. It participates in secondary metabolite biosynthesis; bialaphos biosynthesis. Its function is as follows. Isomerase involved in the biosynthesis of phosphinothricin tripeptide (PTT), also known as bialaphos (BA), a natural-product antibiotic and potent herbicide. Probably catalyzes the isomerization of phosphinomethylmalate to phosphinomethylisomalate. Shows no standard aconitase activity with citrate as a substrate and is not able to complement an acnA mutant. The protein is Phosphinomethylmalate isomerase of Streptomyces viridochromogenes (strain DSM 40736 / JCM 4977 / BCRC 1201 / Tue 494).